The chain runs to 192 residues: Ribosomal RNA small subunit methyltransferase G (192 aa).

S-adenosyl-L-methionine contacts are provided by residues G63, F68, 112–113 (IE), and R125.

It belongs to the methyltransferase superfamily. RNA methyltransferase RsmG family.

The protein localises to the cytoplasm. The catalysed reaction is guanosine(527) in 16S rRNA + S-adenosyl-L-methionine = N(7)-methylguanosine(527) in 16S rRNA + S-adenosyl-L-homocysteine. Specifically methylates the N7 position of guanine in position 527 of 16S rRNA. The polypeptide is Ribosomal RNA small subunit methyltransferase G (Rickettsia bellii (strain OSU 85-389)).